A 388-amino-acid chain; its full sequence is Formate-dependent phosphoribosylglycinamide formyltransferase (388 aa).

Residues 20 to 21 and glutamate 80 contribute to the N(1)-(5-phospho-beta-D-ribosyl)glycinamide site; that span reads EL. Residues arginine 112, lysine 153, 158-163, 193-196, and glutamate 201 contribute to the ATP site; these read SSGKGQ and EEFI. One can recognise an ATP-grasp domain in the interval 117 to 306; it reads RLAFEKLGLR…EFEIHARAIL (190 aa). Mg(2+) is bound by residues glutamate 265 and glutamate 277. N(1)-(5-phospho-beta-D-ribosyl)glycinamide contacts are provided by residues aspartate 284, lysine 352, and 359-360; that span reads RR.

The protein belongs to the PurK/PurT family. As to quaternary structure, homodimer.

It catalyses the reaction N(1)-(5-phospho-beta-D-ribosyl)glycinamide + formate + ATP = N(2)-formyl-N(1)-(5-phospho-beta-D-ribosyl)glycinamide + ADP + phosphate + H(+). Its pathway is purine metabolism; IMP biosynthesis via de novo pathway; N(2)-formyl-N(1)-(5-phospho-D-ribosyl)glycinamide from N(1)-(5-phospho-D-ribosyl)glycinamide (formate route): step 1/1. Involved in the de novo purine biosynthesis. Catalyzes the transfer of formate to 5-phospho-ribosyl-glycinamide (GAR), producing 5-phospho-ribosyl-N-formylglycinamide (FGAR). Formate is provided by PurU via hydrolysis of 10-formyl-tetrahydrofolate. The polypeptide is Formate-dependent phosphoribosylglycinamide formyltransferase (Methanococcus maripaludis (strain DSM 14266 / JCM 13030 / NBRC 101832 / S2 / LL)).